The following is a 32-amino-acid chain: Protamine S4 (32 aa).

The tract at residues 1 to 32 (GCKKRKARKRPKCKKARKRPKCKRRKVAKKKC) is disordered.

As to expression, testis.

Its subcellular location is the nucleus. It is found in the chromosome. In terms of biological role, protamines substitute for histones in the chromatin of sperm during the haploid phase of spermatogenesis. They compact sperm DNA into a highly condensed, stable and inactive complex. This Scyliorhinus canicula (Small-spotted catshark) protein is Protamine S4.